Here is a 34-residue protein sequence, read N- to C-terminus: Chlorotoxin-like peptide AaCtx (34 aa).

4 disulfide bridges follow: Cys-2-Cys-19, Cys-5-Cys-27, Cys-16-Cys-32, and Cys-20-Cys-34.

Belongs to the short scorpion toxin superfamily. Chloride channel inhibitor family. Expressed by the venom gland.

The protein localises to the secreted. In terms of biological role, toxin with unknown function in healthy organisms. On glioma cells, interacts with chloride channels (probably ClC-3/CLCN3) and MMP2 at the surface of glioma cells. This complex is then internalized via caveolae, thus inhibiting the chloride channels necessary for cell shrinkage and tumor propagation. Inhibits migration and invasion of U87 glioma cells expressing CLCN3/ClC-3 voltage-gated chloride channels. The sequence is that of Chlorotoxin-like peptide AaCtx from Androctonus australis (Sahara scorpion).